The sequence spans 2202 residues: Nonribosomal peptide synthetase 5 (2202 aa).

The segment at Thr-58–Ala-443 is adenylation 1. Positions Glu-517–Ser-593 constitute a Carrier 1 domain. Ser-554 is modified (O-(pantetheine 4'-phosphoryl)serine). The condensation 1 stretch occupies residues Ile-625 to Thr-918. The tract at residues Thr-1105–Ala-1482 is adenylation 2. Positions Asp-1563 to Val-1643 constitute a Carrier 2 domain. Ser-1602 carries the post-translational modification O-(pantetheine 4'-phosphoryl)serine. Residues Gly-1664–Gln-1952 are condensation 2. Residues Pro-2103 to Gln-2129 are disordered. Over residues Glu-2115–Gln-2129 the composition is skewed to polar residues. The region spanning Gln-2130–Ile-2202 is the Carrier 3 domain. At Ser-2164 the chain carries O-(pantetheine 4'-phosphoryl)serine.

The protein belongs to the NRP synthetase family.

Its function is as follows. Nonribosomal peptide synthesis (NRPS) is a key mechanism responsible for the biosynthesis of bioactive metabolites which are potentially contributing to organismal virulence. This chain is Nonribosomal peptide synthetase 5 (NRPS5), found in Aspergillus fumigatus (strain ATCC MYA-4609 / CBS 101355 / FGSC A1100 / Af293) (Neosartorya fumigata).